The primary structure comprises 225 residues: Phosphoserine phosphatase (225 aa).

Met1 bears the N-acetylmethionine mark. The active-site Nucleophile is the Asp20. Residues Asp20 and Asp22 each contribute to the Mg(2+) site. 20–22 (DVD) is a binding site for L-serine. Residue Asp22 is the Proton donor of the active site. An O-phospho-L-serine-binding site is contributed by Met52. Gly53 is a binding site for phosphate. L-serine-binding positions include 109–111 (SGG) and Lys158. O-phospho-L-serine contacts are provided by residues 109–111 (SGG) and Lys158. Residue Asp179 coordinates Mg(2+). Thr182 lines the O-phospho-L-serine pocket. Phosphate is bound at residue Thr182.

It belongs to the HAD-like hydrolase superfamily. SerB family. In terms of assembly, homodimer. Mg(2+) serves as cofactor.

Its subcellular location is the cytoplasm. It is found in the cytosol. It catalyses the reaction O-phospho-L-serine + H2O = L-serine + phosphate. The enzyme catalyses O-phospho-D-serine + H2O = D-serine + phosphate. Its pathway is amino-acid biosynthesis; L-serine biosynthesis; L-serine from 3-phospho-D-glycerate: step 3/3. Its function is as follows. Catalyzes the last irreversible step in the biosynthesis of L-serine from carbohydrates, the dephosphorylation of O-phospho-L-serine to L-serine. L-serine can then be used in protein synthesis, to produce other amino acids, in nucleotide metabolism or in glutathione synthesis, or can be racemized to D-serine, a neuromodulator. May also act on O-phospho-D-serine. The chain is Phosphoserine phosphatase from Rattus norvegicus (Rat).